Consider the following 511-residue polypeptide: MSIKTEEISALIKQQLANYNEELAVEEVGTVTYVGDGIARAHGLENALSSELLEFSNGSYGVAQNLETNDVGIIILGEYENIREGDQVKRTGRIMEVPVGDALIGRVVNPLGQPVDGRGEIKTDKTRPIEKKAPGVMARQSVSEPLQTGLKAIDALVPIGRGQRELIIGDRKTGKTSVAIDTIINQKGQDMICIYVAIGQKESTVRTQVETLRRYGAMDYTIVVEAGPSQPAPLLYIAPYAGAAMGEEFMYNGKHVLIVYDDLSKQAAAYREISLLLRRPPGREAYPGDIFYLHSRLLERAAKLSDELGGGSMTALPIIETQAGDISAYIPTNVISITDGQIFLESDLFYSGTRPAIDAGSSVSRVGGAAQTKAMKKVSGTLRLDLSSYRELEAFTQFGSDLDAATQAKLNRGKRTVEVLKQPLHKPLPFEQQTVILYALTHGFIDDVPVDDIMRYESGLNDYLESNAKDLMDEIRQTTKLPDTDKLDAAIKAFTEGFVPEQAADDKDSDK.

169–176 is an ATP binding site; the sequence is GDRKTGKT.

This sequence belongs to the ATPase alpha/beta chains family. As to quaternary structure, F-type ATPases have 2 components, CF(1) - the catalytic core - and CF(0) - the membrane proton channel. CF(1) has five subunits: alpha(3), beta(3), gamma(1), delta(1), epsilon(1). CF(0) has three main subunits: a(1), b(2) and c(9-12). The alpha and beta chains form an alternating ring which encloses part of the gamma chain. CF(1) is attached to CF(0) by a central stalk formed by the gamma and epsilon chains, while a peripheral stalk is formed by the delta and b chains.

The protein localises to the cell membrane. It carries out the reaction ATP + H2O + 4 H(+)(in) = ADP + phosphate + 5 H(+)(out). Functionally, produces ATP from ADP in the presence of a proton gradient across the membrane. The alpha chain is a regulatory subunit. In Latilactobacillus sakei subsp. sakei (strain 23K) (Lactobacillus sakei subsp. sakei), this protein is ATP synthase subunit alpha.